Consider the following 497-residue polypeptide: Cytochrome P450 monooxygenase cicH (497 aa).

The helical transmembrane segment at 2-19 (AILVRLFFALFVVSVYFF) threads the bilayer. A heme-binding site is contributed by C439. N-linked (GlcNAc...) asparagine glycosylation occurs at N443.

This sequence belongs to the cytochrome P450 family. The cofactor is heme.

It localises to the membrane. It participates in phytotoxin biosynthesis. Its function is as follows. Cytochrome P450 monooxygenase; part of the gene cluster that mediates the biosynthesis of cichorine, a phytotoxin active against knapweed, corn, and soybeans. The first step in the pathway is performed by the non-reducing polyketide synthase pkbA that condenses one acetyl-CoA starter unit with 3 malonyl-CoA units. PkbA also catalyzes one methylation step to produce 3-methylorsellinate. The nonribosomal peptide synthase-like protein cicB, the cytochrome P450 monooxygenase cicH and the O-methyltransferase cicE are involved in the conversion of 3-methylorsellinate into nidulol. CicB converts 3-methylorsellinate to a yet unidentified intermediate, cicH may play a ring-closing role for cichorine and cicE is plausibly responsible for the methylation of one of the phenol groups. The oxidoreductase cicC acts downstream with still unidentified enzymes to further convert nidulol into cichorine. This Emericella nidulans (strain FGSC A4 / ATCC 38163 / CBS 112.46 / NRRL 194 / M139) (Aspergillus nidulans) protein is Cytochrome P450 monooxygenase cicH.